A 284-amino-acid polypeptide reads, in one-letter code: Tropomyosin isoforms a/b/d/f (284 aa).

Positions 1 to 284 form a coiled coil; sequence MDAIKKKMQA…DSTFQELSGY (284 aa). The disordered stretch occupies residues 40 to 78; sequence EEELRDTQKKMTQTGDDLDKAQEDLSAATSKLEEKEKTV.

Belongs to the tropomyosin family. In terms of tissue distribution, isoform a and isoform d are expressed in body wall muscles, vulva, anus muscles and male tail muscles. Located to the myofibrils of thin actin filaments.

The protein resides in the cytoplasm. It is found in the myofibril. It localises to the sarcomere. The protein localises to the i band. Tropomyosin, in association with the troponin complex, plays a central role in the calcium dependent regulation of muscle contraction. Involved in muscle actin filament organization and muscle arm extension and morphology. Protects actin filaments from depolymerization by unc-60 in vitro. Also has a role in male mating behavior by regulating the copulatory spicules. Binds to F-actin. This chain is Tropomyosin isoforms a/b/d/f (lev-11), found in Caenorhabditis elegans.